The following is a 101-amino-acid chain: Anti-sigma factor RshA (101 aa).

Residues 9 to 15 (DAHADHD) form an inhibits SigH sigma factor activity region. Cys-23 is a binding site for iron-sulfur cluster. 2 inhibits SigH sigma factor activity regions span residues 28 to 34 (AEVWTLL) and 38 to 44 (CTPETRE). Iron-sulfur cluster is bound by residues His-49, Cys-53, and Cys-56. The residue at position 94 (Thr-94) is a Phosphothreonine.

It belongs to the zinc-associated anti-sigma factor (ZAS) superfamily. In terms of assembly, interacts with cognate sigma factor SigH under reducing conditions. Binding inhibits the interaction of SigH with the RNA polymerase catalytic core. Iron-sulfur cluster is required as a cofactor. In terms of processing, phosphorylated, probably by PknB. Phosphorylation decreases interaction with SigH, leading to increased SigH-mediated transcription.

In terms of biological role, an redox-regulated anti-sigma factor for extracytoplasmic function (ECF) sigma factor SigH. ECF sigma factors are held in an inactive form by a cognate anti-sigma factor. RshA and some peptides derived from it inhibit the sigma factor activity of SigH. Probably releases SigH during oxidative stress. The sequence is that of Anti-sigma factor RshA (rshA) from Mycobacterium tuberculosis (strain CDC 1551 / Oshkosh).